Consider the following 76-residue polypeptide: ATP synthase subunit 9, mitochondrial (76 aa).

2 consecutive transmembrane segments (helical) span residues 14 to 34 and 48 to 68; these read ISTIGTLGAGIGIAIVFAALI and FPFAITGFALSEATGLFCLMV.

The protein belongs to the ATPase C chain family. In terms of assembly, F-type ATPases have 2 components, CF(1) - the catalytic core - and CF(0) - the membrane proton channel. CF(1) has five subunits: alpha(3), beta(3), gamma(1), delta(1), epsilon(1). CF(0) has three main subunits: a, b and c.

It localises to the mitochondrion membrane. Mitochondrial membrane ATP synthase (F(1)F(0) ATP synthase or Complex V) produces ATP from ADP in the presence of a proton gradient across the membrane which is generated by electron transport complexes of the respiratory chain. F-type ATPases consist of two structural domains, F(1) - containing the extramembraneous catalytic core and F(0) - containing the membrane proton channel, linked together by a central stalk and a peripheral stalk. During catalysis, ATP synthesis in the catalytic domain of F(1) is coupled via a rotary mechanism of the central stalk subunits to proton translocation. Part of the complex F(0) domain. A homomeric c-ring of probably 10 subunits is part of the complex rotary element. The chain is ATP synthase subunit 9, mitochondrial (ATP9) from Cyberlindnera mrakii (Yeast).